A 263-amino-acid polypeptide reads, in one-letter code: 3-methyl-2-oxobutanoate hydroxymethyltransferase (263 aa).

Mg(2+)-binding residues include Asp-45 and Asp-84. 3-methyl-2-oxobutanoate contacts are provided by residues 45 to 46 (DS), Asp-84, and Lys-112. Glu-114 provides a ligand contact to Mg(2+). Residue Glu-180 is the Proton acceptor of the active site.

It belongs to the PanB family. In terms of assembly, homodecamer; pentamer of dimers. Mg(2+) serves as cofactor.

The protein resides in the cytoplasm. It catalyses the reaction 3-methyl-2-oxobutanoate + (6R)-5,10-methylene-5,6,7,8-tetrahydrofolate + H2O = 2-dehydropantoate + (6S)-5,6,7,8-tetrahydrofolate. The protein operates within cofactor biosynthesis; (R)-pantothenate biosynthesis; (R)-pantoate from 3-methyl-2-oxobutanoate: step 1/2. Its function is as follows. Catalyzes the reversible reaction in which hydroxymethyl group from 5,10-methylenetetrahydrofolate is transferred onto alpha-ketoisovalerate to form ketopantoate. This is 3-methyl-2-oxobutanoate hydroxymethyltransferase from Klebsiella pneumoniae subsp. pneumoniae (strain ATCC 700721 / MGH 78578).